The primary structure comprises 637 residues: DNA gyrase subunit B (637 aa).

The Toprim domain maps to 420–534 (CEIYIVEGDS…EGHVFIAQPP (115 aa)). 3 residues coordinate Mg(2+): Glu-426, Asp-499, and Asp-501.

It belongs to the type II topoisomerase GyrB family. In terms of assembly, heterotetramer, composed of two GyrA and two GyrB chains. In the heterotetramer, GyrA contains the active site tyrosine that forms a transient covalent intermediate with DNA, while GyrB binds cofactors and catalyzes ATP hydrolysis. Requires Mg(2+) as cofactor. Mn(2+) serves as cofactor. Ca(2+) is required as a cofactor.

It is found in the cytoplasm. It catalyses the reaction ATP-dependent breakage, passage and rejoining of double-stranded DNA.. Its function is as follows. A type II topoisomerase that negatively supercoils closed circular double-stranded (ds) DNA in an ATP-dependent manner to modulate DNA topology and maintain chromosomes in an underwound state. Negative supercoiling favors strand separation, and DNA replication, transcription, recombination and repair, all of which involve strand separation. Also able to catalyze the interconversion of other topological isomers of dsDNA rings, including catenanes and knotted rings. Type II topoisomerases break and join 2 DNA strands simultaneously in an ATP-dependent manner. The chain is DNA gyrase subunit B from Clostridium acetobutylicum (strain ATCC 824 / DSM 792 / JCM 1419 / IAM 19013 / LMG 5710 / NBRC 13948 / NRRL B-527 / VKM B-1787 / 2291 / W).